We begin with the raw amino-acid sequence, 399 residues long: Exodeoxyribonuclease 7 large subunit (399 aa).

The protein belongs to the XseA family. As to quaternary structure, heterooligomer composed of large and small subunits.

Its subcellular location is the cytoplasm. It catalyses the reaction Exonucleolytic cleavage in either 5'- to 3'- or 3'- to 5'-direction to yield nucleoside 5'-phosphates.. Functionally, bidirectionally degrades single-stranded DNA into large acid-insoluble oligonucleotides, which are then degraded further into small acid-soluble oligonucleotides. In Clostridium beijerinckii (strain ATCC 51743 / NCIMB 8052) (Clostridium acetobutylicum), this protein is Exodeoxyribonuclease 7 large subunit.